Consider the following 673-residue polypeptide: Cell division cycle protein 23 homolog (673 aa).

TPR repeat units follow at residues 86 to 120, 159 to 195, 232 to 267, 332 to 365, 400 to 433, 434 to 467, 469 to 501, 502 to 535, 539 to 572, and 577 to 610; these read AEMWTNEILAHLPDKWCAPNTLNLYNQVSELVLDN, NKEFRRAAFFLEKTMNGNKLDHFLHFRCLFLAYYQEH, EDVWFEYLMGLLEVELGLKDLAEKSFRNVVIREPRI, PMIITKIAACSNARHDHDQAISNFEDVRKADPYR, WETCCIVANYHAIRRDSEHAIKFFQRALRLNPGL, AALWVLIGHEFMEMKNNAAACVSYRRAIEIDPAD, RGWYGLGQMYDIMKMPAYALFYYQEAQKCKPHD, SRLLVALGDIYSKLNRIEDAEKCFTGAYLFGDVE, LWSLAKLHERYSDDNKAAQAFEVFLVVYELVTSA, and IYAIAFLANHFFKIEDFDKASEYATKCLAFETLC. Residues 628–673 are disordered; it reads SRLPVEEAPGPSNASAAGGQEAMDTEEAPQEGGEEEMSEGEDDFSF. Low complexity predominate over residues 635–646; it reads APGPSNASAAGG. Over residues 650–673 the composition is skewed to acidic residues; sequence MDTEEAPQEGGEEEMSEGEDDFSF.

Belongs to the APC8/CDC23 family. In terms of assembly, the APC/C complex is probably composed of at least 12 subunits: apc-2, apc-10, apc-11, cdc-26, emb-1, emb-27, emb-30, mat-1, mat-2, mat-3, such-1 and gfi-3.

Its pathway is protein modification; protein ubiquitination. Functionally, probable component of the anaphase promoting complex/cyclosome (APC/C), a cell cycle-regulated E3 ubiquitin ligase that controls progression through mitosis and the G1 phase of the cell cycle. The APC/C complex acts by mediating ubiquitination and subsequent degradation of target proteins. Developmental role in early embryogenesis and the metaphase to anaphase transition in oocyte and spermatocyte meiosis and mitosis in germ cells. Required for embryonic anterior-posterior axis formation. Plays a role in regulating the abundance of glr-1 receptors in postmitotic neurons, which may in turn control animal locomotion. Involved in regulating GABA neurotransmitter release at neuromuscular junctions in GABA motor neurons. This chain is Cell division cycle protein 23 homolog, found in Caenorhabditis elegans.